A 221-amino-acid polypeptide reads, in one-letter code: Lipoprotein-releasing system ATP-binding protein LolD (221 aa).

The ABC transporter domain maps to L6–I220. G42–S49 provides a ligand contact to ATP.

This sequence belongs to the ABC transporter superfamily. Lipoprotein translocase (TC 3.A.1.125) family. In terms of assembly, the complex is composed of two ATP-binding proteins (LolD) and two transmembrane proteins (LolC and LolE).

Its subcellular location is the cell inner membrane. Functionally, part of the ABC transporter complex LolCDE involved in the translocation of mature outer membrane-directed lipoproteins, from the inner membrane to the periplasmic chaperone, LolA. Responsible for the formation of the LolA-lipoprotein complex in an ATP-dependent manner. The protein is Lipoprotein-releasing system ATP-binding protein LolD of Rickettsia conorii (strain ATCC VR-613 / Malish 7).